The sequence spans 469 residues: Protein DETOXIFICATION 18 (469 aa).

Helical transmembrane passes span 40-60 (LPMIFTNLFYYCIPLTSVMFA), 73-93 (LANSWATVTGFAFMTGLSGAL), 121-141 (LVFTILITILWFFTESVFLLL), 152-172 (ALYMKYLAPGLLAYGFLQNIL), 183-203 (PLVLFSFLPLVINIGTTYALV), 206-226 (AGLGFIGAPIATSISLWIAFV), 252-274 (HVVLNLTLSIPSAAMVCLEYWAF), 293-313 (LVAICVNTESISYMLTCGLSA), 344-364 (VLALGVVIAILVGHDAWVGLF), 374-394 (FASLRFFLAASITLDSIQGVL), 406-426 (LATVINLGTFYLIGMPISVLC), and 438-458 (WIGLICGMFCQSASLLLMTIF).

It belongs to the multi antimicrobial extrusion (MATE) (TC 2.A.66.1) family.

Its subcellular location is the membrane. The chain is Protein DETOXIFICATION 18 from Arabidopsis thaliana (Mouse-ear cress).